The following is a 967-amino-acid chain: Disks large homolog 1 (967 aa).

In terms of domain architecture, L27 spans 5–65 (SSEKAHKAIE…LYEQTLLSER (61 aa)). The PDZ 1 domain occupies 202–289 (NIVLEKGHTG…VVSLSLKRRK (88 aa)). The disordered stretch occupies residues 324 to 351 (IHSPSAPIHPPPPPPVHHGSLSQLSVGQ). A compositionally biased stretch (pro residues) spans 330–339 (PIHPPPPPPV). 2 PDZ domains span residues 361 to 448 (VIDL…QQGT) and 510 to 591 (PVQL…QYRP). Residues 619-690 (RKSEYVRALF…PSKKRVEKRE (72 aa)) form the SH3 domain. Residues 673–723 (EETAEGVIPSKKRVEKRERLRRKQVNFNSGSQSLGRNSSTTGLENRRGSRS) form a disordered region. Basic residues predominate over residues 682–696 (SKKRVEKRERLRRKQ). The segment covering 697–715 (VNFNSGSQSLGRNSSTTGL) has biased composition (polar residues). The Guanylate kinase-like domain occupies 769-955 (VRPVIILGAL…VLSKVYSIIS (187 aa)).

It belongs to the MAGUK family. In terms of assembly, homooligomerizes; requires L27 domain. Interacts (via L27 domain) with ajm-1; the interaction regulates ajm-1 apical junction location. As to expression, expressed in the apical junctions in the hypodermis. Expressed in epithelial cells in the reproductive system including vulva, uterus and spermatheca.

It localises to the membrane. The protein localises to the apical cell membrane. Its subcellular location is the cell junction. It is found in the adherens junction. The protein resides in the lateral cell membrane. It localises to the cytoplasm. Functionally, essential multidomain scaffolding protein required for normal development. Recruits channels, receptors and signaling molecules to discrete plasma membrane domains in polarized cells. Required for proper embryonic elongation. Acts upstream of ajm-1 and becomes localized to apical junctions independently of ajm-1. With let-413, cooperatively regulates ajm-1 localization to apical junctions and the establishment of newly formed epithelia. Plays a role in assembling the adherens junction by clustering ajm-1 and other proteins, to form electron-dense structures; may form a compartment distinct to that of hmp-1 and associated proteins. Plays a role in the directed outgrowth of seam cells, towards neighboring seam cells, during larval development. This is Disks large homolog 1 from Caenorhabditis elegans.